Consider the following 331-residue polypeptide: Tagatose 1,6-diphosphate aldolase 2 (331 aa).

Belongs to the aldolase LacD family.

It carries out the reaction D-tagatofuranose 1,6-bisphosphate = D-glyceraldehyde 3-phosphate + dihydroxyacetone phosphate. It functions in the pathway carbohydrate metabolism; D-tagatose 6-phosphate degradation; D-glyceraldehyde 3-phosphate and glycerone phosphate from D-tagatose 6-phosphate: step 2/2. This is Tagatose 1,6-diphosphate aldolase 2 (lacD2) from Enterococcus faecalis (strain ATCC 700802 / V583).